Consider the following 514-residue polypeptide: Intracellular exo-alpha-L-arabinofuranosidase (514 aa).

Residues Glu47 and Asn194 each contribute to the alpha-L-arabinofuranose site. Glu195 serves as the catalytic Proton donor/acceptor. Residues Tyr261, Glu317, and Gln366 each coordinate alpha-L-arabinofuranose. Glu317 (nucleophile) is an active-site residue.

This sequence belongs to the glycosyl hydrolase 51 family. As to quaternary structure, homohexamer; trimer of dimers.

It localises to the cytoplasm. The catalysed reaction is Hydrolysis of terminal non-reducing alpha-L-arabinofuranoside residues in alpha-L-arabinosides.. It participates in glycan metabolism; L-arabinan degradation. Its function is as follows. Involved in the degradation of arabinan and is a key enzyme in the complete degradation of the plant cell wall. Catalyzes the cleavage of terminal alpha-L-arabinofuranosyl residues in different hemicellulosic homopolysaccharides (branched and debranched arabinans) and heteropolysaccharides (arabinoxylans). This Bacteroides ovatus protein is Intracellular exo-alpha-L-arabinofuranosidase (asdII).